The chain runs to 137 residues: Small ribosomal subunit protein uS12 (137 aa).

Residues 1 to 24 (MPTINQLVRKGRRSQSSKSKAPAL) form a disordered region. At D102 the chain carries 3-methylthioaspartic acid.

It belongs to the universal ribosomal protein uS12 family. Part of the 30S ribosomal subunit. Contacts proteins S8 and S17. May interact with IF1 in the 30S initiation complex.

Functionally, with S4 and S5 plays an important role in translational accuracy. Its function is as follows. Interacts with and stabilizes bases of the 16S rRNA that are involved in tRNA selection in the A site and with the mRNA backbone. Located at the interface of the 30S and 50S subunits, it traverses the body of the 30S subunit contacting proteins on the other side and probably holding the rRNA structure together. The combined cluster of proteins S8, S12 and S17 appears to hold together the shoulder and platform of the 30S subunit. The sequence is that of Small ribosomal subunit protein uS12 from Pediococcus pentosaceus (strain ATCC 25745 / CCUG 21536 / LMG 10740 / 183-1w).